We begin with the raw amino-acid sequence, 230 residues long: Large ribosomal subunit protein uL4 (230 aa).

The interval 59–113 is disordered; the sequence is RQGTHATKTRGEVSGGGKKPYRQKGTGRARQGSTRAPQFTGGGTVHGPQPRDYSQ.

The protein belongs to the universal ribosomal protein uL4 family. As to quaternary structure, part of the 50S ribosomal subunit.

In terms of biological role, one of the primary rRNA binding proteins, this protein initially binds near the 5'-end of the 23S rRNA. It is important during the early stages of 50S assembly. It makes multiple contacts with different domains of the 23S rRNA in the assembled 50S subunit and ribosome. Functionally, forms part of the polypeptide exit tunnel. The chain is Large ribosomal subunit protein uL4 from Nocardia farcinica (strain IFM 10152).